The following is a 147-amino-acid chain: GLDGAQKTALKESWKVLGADGPTMMKNGSLLFGLLFKTYPDTKKHFKHFDDATFAAMDTTGVGKAHGVAVFSGLGSMICSIDDDDCVBGLAKKLSRNHLARGVSAADFKLLEAVFKZFLDEATQRKATDAQKDADGALLTMLIKAHV.

One can recognise a Globin domain in the interval glycine 1–valine 147. Histidine 66 and histidine 98 together coordinate heme b.

This sequence belongs to the globin family. Homodimer.

Its subcellular location is the cytoplasm. In Busycotypus canaliculatus (Channeled whelk), this protein is Globin.